The sequence spans 244 residues: E3 ubiquitin-protein ligase RNF166 (244 aa).

Residues 10–30 (AQRPQAPGPGPPRPPPPAGPA) form a disordered region. A compositionally biased stretch (pro residues) spans 15–28 (APGPGPPRPPPPAG). The RING-type zinc-finger motif lies at 40-80 (CPICLEVFHRAVGIAGCGHTFCGECLQPCLQVPSPLCPLCR). Positions 105, 108, 120, and 124 each coordinate Zn(2+). The segment at 105-124 (CRGCSKKVTLAKMRSHVSSC) adopts a C2HC RNF-type zinc-finger fold. The 17-residue stretch at 228 to 244 (DEEAALQAALALSLSEN) folds into the UIM domain.

Its subcellular location is the cytoplasm. The enzyme catalyses S-ubiquitinyl-[E2 ubiquitin-conjugating enzyme]-L-cysteine + [acceptor protein]-L-lysine = [E2 ubiquitin-conjugating enzyme]-L-cysteine + N(6)-ubiquitinyl-[acceptor protein]-L-lysine.. It participates in protein modification; protein ubiquitination. E3 ubiquitin-protein ligase that promotes the ubiquitination of different substrates. This chain is E3 ubiquitin-protein ligase RNF166 (RNF166), found in Gallus gallus (Chicken).